The sequence spans 296 residues: GTPase Era (296 aa).

The 168-residue stretch at R7 to E174 folds into the Era-type G domain. The G1 stretch occupies residues G15–S22. G15 to S22 provides a ligand contact to GTP. A G2 region spans residues Q41–H45. The tract at residues D62–G65 is G3. Residues D62 to F66 and S123 to D126 each bind GTP. Residues S123 to D126 are G4. Residues V153–A155 are G5. One can recognise a KH type-2 domain in the interval V197–K281.

This sequence belongs to the TRAFAC class TrmE-Era-EngA-EngB-Septin-like GTPase superfamily. Era GTPase family. Monomer.

The protein resides in the cytoplasm. Its subcellular location is the cell inner membrane. An essential GTPase that binds both GDP and GTP, with rapid nucleotide exchange. Plays a role in 16S rRNA processing and 30S ribosomal subunit biogenesis and possibly also in cell cycle regulation and energy metabolism. The sequence is that of GTPase Era from Bordetella avium (strain 197N).